Consider the following 990-residue polypeptide: Fibronectin-binding protein A (990 aa).

Residues 1–35 form the signal peptide; that stretch reads MKNNLRYGIRKHKLGAASVFLGTMIVVGMGQDKEA. The YSIRK-G/S signaling motif motif lies at 7–18; the sequence is YGIRKHKLGAAS. 2 disordered regions span residues 33–61 and 96–193; these read KEAA…SETQ and PKAV…TEVK. A compositionally biased stretch (polar residues) spans 37–55; that stretch reads TSEQKTTTVEENGNSATDN. Positions 37–511 are ligand-binding A region; it reads TSEQKTTTVE…SNKADGNGKN (475 aa). 2 stretches are compositionally biased toward basic and acidic residues: residues 112-126 and 179-193; these read TVKE…KPQV and DVAE…TEVK. Residues 194–511 form a fibrinogen/elastin/tropoelastin-binding region; that stretch reads GTDVTSKVTV…SNKADGNGKN (318 aa). The segment at 512–834 is fibronectin-binding; it reads GQIIQNNDFE…EGQQTIEEDT (323 aa). The B-1 repeat unit spans residues 545-574; it reads ENQDNTPLDIDYHTAIDGEGGYADGYIETI. The tract at residues 545 to 604 is 2 X approximate tandem repeats; that stretch reads ENQDNTPLDIDYHTAIDGEGGYADGYIETIEETDSSAIDIDYHTAVDSEAGHVGGYTESS. The B-2 repeat unit spans residues 575–604; that stretch reads EETDSSAIDIDYHTAVDSEAGHVGGYTESS. Residues 702-969 are disordered; sequence LGYEGGQNSG…EESTNKGMLF (268 aa). One copy of the D-1 repeat lies at 707–744; that stretch reads GQNSGNQSFEEDTEEDKPKYEQGGNIVDIDFDSVPQIQ. Residues 707–850 are 4 X approximate tandem repeats; it reads GQNSGNQSFE…TPEVPSEPET (144 aa). A compositionally biased stretch (polar residues) spans 741-752; sequence PQIQGQNNGNQS. The D-2 repeat unit spans residues 745–782; the sequence is GQNNGNQSFEEDTEKDKPKYEQGGNIIDIDFDSVPQIH. Residues 783-821 form a D-3 repeat; sequence GFNKHNEIIEEDTNKDKPNYQFGGHNSVDFEEDTLPKVS. Positions 786–800 are enriched in basic and acidic residues; sequence KHNEIIEEDTNKDKP. A D-4; truncated repeat occupies 822-850; the sequence is GQNEGQQTIEEDTTPPTPPTPEVPSEPET. Pro residues predominate over residues 836-910; it reads PPTPPTPEVP…PAEPGKPVPP (75 aa). WR repeat units lie at residues 851–864, 865–878, 879–892, 893–906, and 907–920; these read PTPP…EPET, PTPP…EPGK, and PVPP…KPSK. Residues 851 to 920 form a 5 X tandem repeats, Pro-rich (WR) region; the sequence is PTPPTPEVPS…AEEEPKKPSK (70 aa). The LPXTG sorting signal motif lies at 954–958; that stretch reads LPETG. Residue threonine 957 is modified to Pentaglycyl murein peptidoglycan amidated threonine. Residues 958–990 constitute a propeptide, removed by sortase; that stretch reads GGEESTNKGMLFGGLFSILGLALLRRNKKNHKA.

Its subcellular location is the secreted. The protein localises to the cell wall. Functionally, promotes bacterial attachment to multiple substrates, such as fibronectin (Fn), fibrinogen (Fg), elastin peptides and tropoelastin. This confers to S.aureus the ability to invade endothelial cells. Promotes adherence to and aggregation of activated platelets. The protein is Fibronectin-binding protein A (fnbA) of Staphylococcus aureus (strain bovine RF122 / ET3-1).